The sequence spans 59 residues: Small ribosomal subunit protein eS17 (59 aa).

The protein belongs to the eukaryotic ribosomal protein eS17 family.

This chain is Small ribosomal subunit protein eS17, found in Halobacterium salinarum (strain ATCC 29341 / DSM 671 / R1).